We begin with the raw amino-acid sequence, 860 residues long: Leucine--tRNA ligase (860 aa).

The 'HIGH' region motif lies at 42 to 52; that stretch reads PYPSGRLHMGH. The short motif at 619 to 623 is the 'KMSKS' region element; that stretch reads KMSKS. K622 provides a ligand contact to ATP.

It belongs to the class-I aminoacyl-tRNA synthetase family.

The protein resides in the cytoplasm. It catalyses the reaction tRNA(Leu) + L-leucine + ATP = L-leucyl-tRNA(Leu) + AMP + diphosphate. In Yersinia pestis bv. Antiqua (strain Angola), this protein is Leucine--tRNA ligase.